Here is a 469-residue protein sequence, read N- to C-terminus: Zinc transporter SLC39A7 (469 aa).

A helical membrane pass occupies residues 5 to 25 (LGAPHWVAVGLLTWAALGLLV). Composition is skewed to basic and acidic residues over residues 43–56 (HGHS…DFHH) and 66–114 (HTHE…EHSH). Positions 43–122 (HGHSHRRSHE…SHGGYGESGA (80 aa)) are disordered. Position 66 is a pros-methylhistidine (H66). Helical transmembrane passes span 138-158 (ALGA…LIPV), 169-189 (LQIL…LHLI), and 214-234 (GPIL…LVVE). The segment covering 242 to 255 (GGHGHSHGHGHTHG) has biased composition (basic residues). The tract at residues 242–313 (GGHGHSHGHG…QNSEEEKTGS (72 aa)) is disordered. Positions 256–266 (HTQGSHGHGTQ) are enriched in low complexity. S275 and S276 each carry phosphoserine. The segment covering 295–313 (RLKDGPLRPQNSEEEKTGS) has biased composition (basic and acidic residues). The next 3 helical transmembrane spans lie at 386 to 406 (LTAI…GGAV), 417 to 437 (GWVL…SVLP), and 448 to 468 (SLLE…IAHL).

The protein belongs to the ZIP transporter (TC 2.A.5) family. KE4/Catsup subfamily. Homodimer. Post-translationally, methylation at some His residue by METTL9 leads to reduced zinc-binding. In terms of processing, rapidly phosphorylated by CK2 following Zn(2+) treatment. This phosphorylation is required for efficient cytosolic Zn(2+) release.

The protein resides in the endoplasmic reticulum membrane. It is found in the golgi apparatus. The protein localises to the cis-Golgi network membrane. It catalyses the reaction Zn(2+)(in) = Zn(2+)(out). In terms of biological role, transports Zn(2+) from the endoplasmic reticulum (ER)/Golgi apparatus to the cytosol, playing an essential role in the regulation of cytosolic zinc levels. Acts as a gatekeeper of zinc release from intracellular stores, requiring post-translational activation by phosphorylation, resulting in activation of multiple downstream pathways leading to cell growth and proliferation. Has an essential role in B cell development and is required for proper B cell receptor signaling. Plays an important role in maintaining intestinal epithelial homeostasis and skin dermis development by regulating ER function. Controls cell signaling pathways involved in glucose metabolism in skeletal muscle. Has a protective role against ER stress in different biological contexts. Mediates Zn(2+)-induced ferroptosis. The sequence is that of Zinc transporter SLC39A7 from Canis lupus familiaris (Dog).